Here is a 488-residue protein sequence, read N- to C-terminus: UDP-N-acetylmuramate--L-alanine ligase (488 aa).

126 to 132 (GTHGKTT) serves as a coordination point for ATP.

The protein belongs to the MurCDEF family.

It localises to the cytoplasm. The catalysed reaction is UDP-N-acetyl-alpha-D-muramate + L-alanine + ATP = UDP-N-acetyl-alpha-D-muramoyl-L-alanine + ADP + phosphate + H(+). Its pathway is cell wall biogenesis; peptidoglycan biosynthesis. Its function is as follows. Cell wall formation. The protein is UDP-N-acetylmuramate--L-alanine ligase of Cronobacter sakazakii (strain ATCC BAA-894) (Enterobacter sakazakii).